Consider the following 506-residue polypeptide: H/ACA ribonucleoprotein complex subunit DKC1 (506 aa).

The tract at residues 1 to 26 (MADTESKKEKKRKSKKISDEEVGDIQ) is disordered. Asp-120 functions as the Nucleophile in the catalytic mechanism. The PUA domain maps to 291–366 (HKRIVMKDSA…VVAKIKRVIM (76 aa)). 2 disordered regions span residues 391–410 (GLLD…WKEG) and 419–506 (VKKG…ADSD). The span at 421 to 434 (KGGEASAKRKRDES) shows a compositional bias: basic and acidic residues. Residues 457-466 (EKKKKKKEKK) are compositionally biased toward basic residues.

This sequence belongs to the pseudouridine synthase TruB family. Part of the H/ACA small nucleolar ribonucleoprotein (H/ACA snoRNP) complex. The complex binds a box H/ACA small nucleolar RNA (snoRNA), which may target the specific site of modification within the RNA substrate.

It is found in the nucleus. The protein resides in the nucleolus. Its subcellular location is the cajal body. The catalysed reaction is uridine in 5S rRNA = pseudouridine in 5S rRNA. Catalytic subunit of H/ACA small nucleolar ribonucleoprotein (H/ACA snoRNP) complex, which catalyzes pseudouridylation of rRNA. This involves the isomerization of uridine such that the ribose is subsequently attached to C5, instead of the normal N1. Pseudouridine ('psi') residues may serve to stabilize the conformation of rRNAs. Required for ribosome biogenesis and telomere maintenance. In Danio rerio (Zebrafish), this protein is H/ACA ribonucleoprotein complex subunit DKC1.